Here is a 65-residue protein sequence, read N- to C-terminus: Hirudin-3 (65 aa).

Residues V1–Y3 form an interaction with thrombin active site region. 3 disulfide bridges follow: C6-C14, C16-C28, and C22-C39. The tract at residues C39 to Q65 is disordered. O-linked (GalNAc...) threonine glycosylation is present at T45. Positions D55 to Q65 are interaction with fibrinogen-binding exosite of thrombin. Residues D55–Q65 show a composition bias toward acidic residues. Y63 is subject to Sulfotyrosine.

It belongs to the protease inhibitor I14 (hirudin) family.

It localises to the secreted. Functionally, hirudin is a potent thrombin-specific protease inhibitor. It forms a stable non-covalent complex with alpha-thrombin, thereby abolishing its ability to cleave fibrinogen. The sequence is that of Hirudin-3 from Hirudo medicinalis (Medicinal leech).